The following is a 123-amino-acid chain: Large ribosomal subunit protein bL12 (123 aa).

Belongs to the bacterial ribosomal protein bL12 family. In terms of assembly, homodimer. Part of the ribosomal stalk of the 50S ribosomal subunit. Forms a multimeric L10(L12)X complex, where L10 forms an elongated spine to which 2 to 4 L12 dimers bind in a sequential fashion. Binds GTP-bound translation factors.

Its function is as follows. Forms part of the ribosomal stalk which helps the ribosome interact with GTP-bound translation factors. Is thus essential for accurate translation. This chain is Large ribosomal subunit protein bL12, found in Mycoplasmopsis synoviae (strain 53) (Mycoplasma synoviae).